The sequence spans 1406 residues: Enhancer of mRNA-decapping protein 4 (1406 aa).

Residue Ala2 is modified to N-acetylalanine. A phosphoserine mark is found at Ser3 and Ser6. Residue Lys125 is modified to N6-acetyllysine. 4 WD repeats span residues 174-214 (GFTG…GKIQ), 230-277 (NHFR…SSHN), 295-334 (GHST…QDEP), and 342-393 (PHDG…CLQT). Phosphoserine is present on residues Ser560, Ser565, Ser583, and Ser585. Disordered regions lie at residues 604-631 (SLQQ…SSSS) and 667-686 (SLTL…SLLP). Over residues 609–631 (SASPSSSSSSSSSSSSSSSSSSS) the composition is skewed to low complexity. Residues Ser680, Ser712, Ser727, and Ser729 each carry the phosphoserine modification. The interval 719–744 (EPLGLPQASPSRTRSPDVISSASTAL) is disordered. Positions 726–744 (ASPSRTRSPDVISSASTAL) are enriched in polar residues. Phosphothreonine is present on Thr731. Ser733 and Ser745 each carry phosphoserine. Disordered regions lie at residues 782–855 (HLLS…NGLQ) and 873–951 (QRDS…VAEP). Composition is skewed to polar residues over residues 823–832 (EVATPDSQVW) and 841–852 (ETCSTLTESPRN). Thr826 carries the phosphothreonine modification. Phosphoserine occurs at positions 849 and 876. Position 879 is a phosphothreonine (Thr879). A phosphoserine mark is found at Ser880, Ser884, Ser892, Ser895, and Ser897. Phosphothreonine is present on Thr906. Positions 971-1030 (HNQEELLQRLCAQLEGLQSTVTDHVERALETRHEQEQRRLERALAEGQQRGGQLQEQLTQ) form a coiled coil. Phosphoserine is present on Ser1385.

The protein belongs to the WD repeat EDC4 family. In terms of assembly, part of a decapping complex consisting of DCP1A, DCP2, EDC3, EDC4 and probably DDX6. Part of a complex consisting of DCP1A, EDC3, EDC4 and DDX6. Part of a complex consisting of DCP1B, EDC3, EDC4 and DDX6. Interacts with DCP2. Interacts with RC3H1. Interacts with NBDY. Interacts with Tex19.1 and, probably, Tex19.2. Interacts with LSM14A. Interacts with DDX6.

The protein resides in the cytoplasm. It localises to the P-body. It is found in the nucleus. Functionally, in the process of mRNA degradation, seems to play a role in mRNA decapping. Component of a complex containing DCP2 and DCP1A which functions in decapping of ARE-containing mRNAs. Promotes complex formation between DCP1A and DCP2. Enhances the catalytic activity of DCP2 (in vitro). In Mus musculus (Mouse), this protein is Enhancer of mRNA-decapping protein 4.